Here is a 340-residue protein sequence, read N- to C-terminus: Biotin synthase (340 aa).

The Radical SAM core domain maps to 53 to 280; sequence SAIQLSSLLS…LARVRLSAGR (228 aa). Residues Cys68, Cys72, and Cys75 each coordinate [4Fe-4S] cluster. The [2Fe-2S] cluster site is built by Cys112, Cys143, Cys203, and Arg275.

It belongs to the radical SAM superfamily. Biotin synthase family. As to quaternary structure, homodimer. It depends on [4Fe-4S] cluster as a cofactor. Requires [2Fe-2S] cluster as cofactor.

It carries out the reaction (4R,5S)-dethiobiotin + (sulfur carrier)-SH + 2 reduced [2Fe-2S]-[ferredoxin] + 2 S-adenosyl-L-methionine = (sulfur carrier)-H + biotin + 2 5'-deoxyadenosine + 2 L-methionine + 2 oxidized [2Fe-2S]-[ferredoxin]. It functions in the pathway cofactor biosynthesis; biotin biosynthesis; biotin from 7,8-diaminononanoate: step 2/2. Its function is as follows. Catalyzes the conversion of dethiobiotin (DTB) to biotin by the insertion of a sulfur atom into dethiobiotin via a radical-based mechanism. The sequence is that of Biotin synthase from Bordetella petrii (strain ATCC BAA-461 / DSM 12804 / CCUG 43448).